Here is a 239-residue protein sequence, read N- to C-terminus: UDP-2,3-diacylglucosamine hydrolase (239 aa).

Positions 8, 10, 41, 79, and 114 each coordinate Mn(2+). Residue 79 to 80 (NR) participates in substrate binding. Residues D122, S160, N164, K167, and H195 each contribute to the substrate site. Mn(2+) contacts are provided by H195 and H197.

This sequence belongs to the LpxH family. Mn(2+) serves as cofactor.

Its subcellular location is the cell inner membrane. It carries out the reaction UDP-2-N,3-O-bis[(3R)-3-hydroxytetradecanoyl]-alpha-D-glucosamine + H2O = 2-N,3-O-bis[(3R)-3-hydroxytetradecanoyl]-alpha-D-glucosaminyl 1-phosphate + UMP + 2 H(+). It participates in glycolipid biosynthesis; lipid IV(A) biosynthesis; lipid IV(A) from (3R)-3-hydroxytetradecanoyl-[acyl-carrier-protein] and UDP-N-acetyl-alpha-D-glucosamine: step 4/6. In terms of biological role, hydrolyzes the pyrophosphate bond of UDP-2,3-diacylglucosamine to yield 2,3-diacylglucosamine 1-phosphate (lipid X) and UMP by catalyzing the attack of water at the alpha-P atom. Involved in the biosynthesis of lipid A, a phosphorylated glycolipid that anchors the lipopolysaccharide to the outer membrane of the cell. The sequence is that of UDP-2,3-diacylglucosamine hydrolase from Sodalis glossinidius (strain morsitans).